Reading from the N-terminus, the 765-residue chain is Probable dipeptidyl peptidase 4 (765 aa).

Residues 1–14 form the signal peptide; it reads MKWSILLLVGCAAA. N-linked (GlcNAc...) asparagine glycans are attached at residues Asn35, Asn78, Asn101, Asn110, Asn169, Asn218, Asn465, and Asn490. Ser613 serves as the catalytic Charge relay system. N-linked (GlcNAc...) asparagine glycosylation occurs at Asn665. Active-site charge relay system residues include Asp690 and His725.

The protein belongs to the peptidase S9B family.

Its subcellular location is the secreted. It catalyses the reaction Release of an N-terminal dipeptide, Xaa-Yaa-|-Zaa-, from a polypeptide, preferentially when Yaa is Pro, provided Zaa is neither Pro nor hydroxyproline.. Its function is as follows. Extracellular dipeptidyl-peptidase which removes N-terminal dipeptides sequentially from polypeptides having unsubstituted N-termini provided that the penultimate residue is proline. Contributes to pathogenicity. The chain is Probable dipeptidyl peptidase 4 (dpp4) from Aspergillus fumigatus (strain CBS 144.89 / FGSC A1163 / CEA10) (Neosartorya fumigata).